We begin with the raw amino-acid sequence, 263 residues long: Kallikrein 1-related peptidase b24 (263 aa).

Positions 1-17 are cleaved as a signal peptide; sequence MWFLILFLALSLGGIDA. Positions 18–24 are cleaved as a propeptide — activation peptide; the sequence is APPVQSR. Residues 25–260 enclose the Peptidase S1 domain; it reads VVGGFKCEKN…FASWIKDTMA (236 aa). 5 disulfides stabilise this stretch: C31–C175, C50–C66, C154–C221, C186–C200, and C211–C236. The active-site Charge relay system is H65. Residues N69 and N105 are each glycosylated (N-linked (GlcNAc...) asparagine). The Charge relay system role is filled by D122. A glycan (N-linked (GlcNAc...) asparagine) is linked at N185. The active-site Charge relay system is the S215.

It belongs to the peptidase S1 family. Kallikrein subfamily.

The catalysed reaction is Preferential cleavage of Arg-|-Xaa bonds in small molecule substrates. Highly selective action to release kallidin (lysyl-bradykinin) from kininogen involves hydrolysis of Met-|-Xaa or Leu-|-Xaa.. Functionally, glandular kallikreins cleave Met-Lys and Arg-Ser bonds in kininogen to release Lys-bradykinin. This is Kallikrein 1-related peptidase b24 (Klk1b24) from Mus musculus (Mouse).